The following is a 177-amino-acid chain: Embryogenesis-like protein (177 aa).

Positions 98–118 (VDEINLKFAEAREEIEMAMDA) form a coiled coil.

Interacts with HAG1/GCN5. Expressed in flowers, leaves, stems and siliques.

It is found in the nucleus. Functionally, activates gene expression by recruiting HAG1/GCN5 and triggering subsequent histone H3 acetylation of target genes promoters. This is Embryogenesis-like protein from Arabidopsis thaliana (Mouse-ear cress).